The chain runs to 298 residues: 4-hydroxy-3-methylbut-2-enyl diphosphate reductase (298 aa).

Position 12 (Cys12) interacts with [4Fe-4S] cluster. Positions 40 and 78 each coordinate (2E)-4-hydroxy-3-methylbut-2-enyl diphosphate. Positions 40 and 78 each coordinate dimethylallyl diphosphate. Isopentenyl diphosphate contacts are provided by His40 and His78. Cys100 contacts [4Fe-4S] cluster. Residue His128 participates in (2E)-4-hydroxy-3-methylbut-2-enyl diphosphate binding. Residue His128 coordinates dimethylallyl diphosphate. His128 is a binding site for isopentenyl diphosphate. The active-site Proton donor is the Glu130. A (2E)-4-hydroxy-3-methylbut-2-enyl diphosphate-binding site is contributed by Thr171. Cys200 contacts [4Fe-4S] cluster. (2E)-4-hydroxy-3-methylbut-2-enyl diphosphate contacts are provided by Ser228, Ser229, Asn230, and Ser270. 4 residues coordinate dimethylallyl diphosphate: Ser228, Ser229, Asn230, and Ser270. Positions 228, 229, 230, and 270 each coordinate isopentenyl diphosphate.

It belongs to the IspH family. It depends on [4Fe-4S] cluster as a cofactor.

The enzyme catalyses isopentenyl diphosphate + 2 oxidized [2Fe-2S]-[ferredoxin] + H2O = (2E)-4-hydroxy-3-methylbut-2-enyl diphosphate + 2 reduced [2Fe-2S]-[ferredoxin] + 2 H(+). It carries out the reaction dimethylallyl diphosphate + 2 oxidized [2Fe-2S]-[ferredoxin] + H2O = (2E)-4-hydroxy-3-methylbut-2-enyl diphosphate + 2 reduced [2Fe-2S]-[ferredoxin] + 2 H(+). Its pathway is isoprenoid biosynthesis; dimethylallyl diphosphate biosynthesis; dimethylallyl diphosphate from (2E)-4-hydroxy-3-methylbutenyl diphosphate: step 1/1. It participates in isoprenoid biosynthesis; isopentenyl diphosphate biosynthesis via DXP pathway; isopentenyl diphosphate from 1-deoxy-D-xylulose 5-phosphate: step 6/6. Its function is as follows. Catalyzes the conversion of 1-hydroxy-2-methyl-2-(E)-butenyl 4-diphosphate (HMBPP) into a mixture of isopentenyl diphosphate (IPP) and dimethylallyl diphosphate (DMAPP). Acts in the terminal step of the DOXP/MEP pathway for isoprenoid precursor biosynthesis. In Kosmotoga olearia (strain ATCC BAA-1733 / DSM 21960 / TBF 19.5.1), this protein is 4-hydroxy-3-methylbut-2-enyl diphosphate reductase.